The primary structure comprises 297 residues: uncharacterized protein (297 aa).

The active site involves Glu46.

The protein belongs to the PhzF family. In terms of assembly, homodimer and homotetramer.

This is an uncharacterized protein from Escherichia coli O157:H7.